The following is a 167-amino-acid chain: Putative pre-16S rRNA nuclease (167 aa).

Belongs to the YqgF nuclease family.

Its subcellular location is the cytoplasm. Its function is as follows. Could be a nuclease involved in processing of the 5'-end of pre-16S rRNA. This chain is Putative pre-16S rRNA nuclease, found in Streptomyces coelicolor (strain ATCC BAA-471 / A3(2) / M145).